The primary structure comprises 317 residues: Methionyl-tRNA formyltransferase (317 aa).

112–115 provides a ligand contact to (6S)-5,6,7,8-tetrahydrofolate; it reads SLLP.

The protein belongs to the Fmt family.

It catalyses the reaction L-methionyl-tRNA(fMet) + (6R)-10-formyltetrahydrofolate = N-formyl-L-methionyl-tRNA(fMet) + (6S)-5,6,7,8-tetrahydrofolate + H(+). Its function is as follows. Attaches a formyl group to the free amino group of methionyl-tRNA(fMet). The formyl group appears to play a dual role in the initiator identity of N-formylmethionyl-tRNA by promoting its recognition by IF2 and preventing the misappropriation of this tRNA by the elongation apparatus. The chain is Methionyl-tRNA formyltransferase from Histophilus somni (strain 2336) (Haemophilus somnus).